Consider the following 551-residue polypeptide: MHHLHPMIVCIFVMYTGIVGSDAIAGDQLLNIGVIQSKIRSLMYYTDGGASFIVVKLLPNLPPSNGTCNITSLDAYNVTLFKLLTPLIENLSKISTVTDTKTRQKRFAGVVVGLAALGVATAAQITAAVAIVKANANAAAINNLASSIQSTNKAVSDVIDASRTIATAVQAIQDRINGAIVNGITSASCRAHDALIGSILNLYLTELTTIFHNQITNPALTPLSIQALRILLGSTLPIVIESKLNTNFNTAELLSSGLLTGQIISISPMYMQMLIQINVPTFIMQPGAKVIDLIAISANHKLQEVVVQVPNRILEYANELQNYPANDCVVTPNSVFCRYNEGSPIPESQYQCLRGNLNSCTFTPIIGNFLKRFAFANGVLYANCKSLLCRCADPPHVVSQDDTQGISIIDIKRCSEMMLDTFSFRITSTFNATYVTDFSMINANIVHLSPLDLSNQINSINKSLKSAEDWIADSNFFANQARTAKTLYSLSAIALILSVITLVVVGLLIAYIIKLVSQIHQFRSLAATTMFHRENPAFFSKNNHGNIYGIS.

Positions 1-23 (MHHLHPMIVCIFVMYTGIVGSDA) are cleaved as a signal peptide. Residues 24–492 (IAGDQLLNIG…TAKTLYSLSA (469 aa)) lie on the Extracellular side of the membrane. N-linked (GlcNAc...) asparagine; by host glycosylation is found at asparagine 65, asparagine 69, asparagine 77, and asparagine 90. Disulfide bonds link cysteine 68–cysteine 189, cysteine 328–cysteine 337, cysteine 352–cysteine 360, cysteine 384–cysteine 389, and cysteine 391–cysteine 414. Positions 107-131 (FAGVVVGLAALGVATAAQITAAVAI) are fusion peptide. Positions 132–160 (VKANANAAAINNLASSIQSTNKAVSDVID) form a coiled coil. N-linked (GlcNAc...) asparagine; by host glycans are attached at residues asparagine 431 and asparagine 461. A coiled-coil region spans residues 456 to 481 (QINSINKSLKSAEDWIADSNFFANQA). A helical transmembrane segment spans residues 493–513 (IALILSVITLVVVGLLIAYII). Over 514 to 551 (KLVSQIHQFRSLAATTMFHRENPAFFSKNNHGNIYGIS) the chain is Cytoplasmic.

Belongs to the paramyxoviruses fusion glycoprotein family. In terms of assembly, homotrimer of disulfide-linked F1-F2. In terms of processing, the inactive precursor F0 is glycosylated and proteolytically cleaved into F1 and F2 to be functionally active. The cleavage is mediated by cellular proteases during the transport and maturation of the polypeptide.

The protein resides in the virion membrane. The protein localises to the host cell membrane. Class I viral fusion protein. Under the current model, the protein has at least 3 conformational states: pre-fusion native state, pre-hairpin intermediate state, and post-fusion hairpin state. During viral and plasma cell membrane fusion, the heptad repeat (HR) regions assume a trimer-of-hairpins structure, positioning the fusion peptide in close proximity to the C-terminal region of the ectodomain. The formation of this structure appears to drive apposition and subsequent fusion of viral and plasma cell membranes. Directs fusion of viral and cellular membranes leading to delivery of the nucleocapsid into the cytoplasm. This fusion is pH independent and occurs directly at the outer cell membrane. The trimer of F1-F2 (F protein) probably interacts with HN at the virion surface. Upon HN binding to its cellular receptor, the hydrophobic fusion peptide is unmasked and interacts with the cellular membrane, inducing the fusion between cell and virion membranes. Later in infection, F proteins expressed at the plasma membrane of infected cells could mediate fusion with adjacent cells to form syncytia, a cytopathic effect that could lead to tissue necrosis. The chain is Fusion glycoprotein F0 (F) from Homo sapiens (Human).